We begin with the raw amino-acid sequence, 131 residues long: Small ribosomal subunit protein uS8 (131 aa).

It belongs to the universal ribosomal protein uS8 family. Part of the 30S ribosomal subunit. Contacts proteins S5 and S12.

Functionally, one of the primary rRNA binding proteins, it binds directly to 16S rRNA central domain where it helps coordinate assembly of the platform of the 30S subunit. This is Small ribosomal subunit protein uS8 from Pelagibacter ubique (strain HTCC1062).